The primary structure comprises 452 residues: LIM/homeobox protein lim-7 (452 aa).

LIM zinc-binding domains lie at 54–116 (AVCA…LFTT) and 117–179 (RCSR…LDNP). The tract at residues 184–268 (SVPDYSKLNN…KKKDKQATRV (85 aa)) is disordered. 2 stretches are compositionally biased toward low complexity: residues 192 to 205 (NNNN…SSSN) and 217 to 227 (TLTSLDNNTSS). A DNA-binding region (homeobox) is located at residues 265 to 324 (ATRVRTVLNENQLKILRDCYSINSRPDATLKERLVEMTGLSARVIRVWFQNKRCKDKKRQ). Residues 347–376 (GIGPLMVQPATPHIDNTLGGPIDIQHFAQW) form an LIM interaction domain (LID) region.

Interacts (via LID domain) with ceh-14 (via LIM zinc-binding domains 1 and 2). In terms of tissue distribution, expressed in gonadal sheath cells, URA motoneurons, and 10 additional cells near the isthmus and terminal bulb of the pharynx. Expressed in the ALA and BDU cells.

Its subcellular location is the nucleus. In terms of biological role, probable DNA-binding transcriptional activator. The sequence is that of LIM/homeobox protein lim-7 from Caenorhabditis elegans.